The primary structure comprises 107 residues: Ig kappa chain V-VI region TEPC 601/TEPC 191 (107 aa).

The segment at 1-23 is framework-1; sequence EIVLTQSPAITAASLGQKVTITC. Residues cysteine 23 and cysteine 87 are joined by a disulfide bond. Residues 24 to 33 form a complementarity-determining-1 region; it reads SASSSVSYMH. A framework-2 region spans residues 34 to 48; the sequence is WYQQKSGTSPKPWIY. Positions 49 to 55 are complementarity-determining-2; that stretch reads EISKLAS. The framework-3 stretch occupies residues 56–87; it reads GVPARFSGSGSGTSYSLTISSMEAEDAAIYYC. Positions 88–96 are complementarity-determining-3; sequence QQWNYPLIT. Residues 97-106 form a framework-4 region; sequence FGAGTKLELK.

This is Ig kappa chain V-VI region TEPC 601/TEPC 191 from Mus musculus (Mouse).